Reading from the N-terminus, the 453-residue chain is Carbamoyl phosphate synthase arginine-specific small chain (453 aa).

A mitochondrion-targeting transit peptide spans 1–28; it reads MFARVFKAMPARAPAFTSVNASIQSRFM. In terms of domain architecture, Glutamine amidotransferase type-1 spans 219–406; the sequence is HVAVIDCGVK…LDSVVKYKNH (188 aa). Cysteine 295 (nucleophile) is an active-site residue. Active-site residues include histidine 379 and glutamate 381.

Belongs to the CarA family. Heterodimer composed of 2 chains; the small (or glutamine) chain promotes the hydrolysis of glutamine to ammonia, which is used by the large (or ammonia) chain to synthesize carbamoyl phosphate.

It is found in the mitochondrion matrix. The enzyme catalyses hydrogencarbonate + L-glutamine + 2 ATP + H2O = carbamoyl phosphate + L-glutamate + 2 ADP + phosphate + 2 H(+). It carries out the reaction L-glutamine + H2O = L-glutamate + NH4(+). The protein operates within amino-acid biosynthesis; L-arginine biosynthesis; carbamoyl phosphate from bicarbonate: step 1/1. Its function is as follows. Small subunit of the arginine-specific carbamoyl phosphate synthase (CPSase). CPSase catalyzes the formation of carbamoyl phosphate from the ammonia moiety of glutamine, carbonate, and phosphate donated by ATP, the first step of the arginine biosynthetic pathway. The small subunit (glutamine amidotransferase) binds and cleaves glutamine to supply the large subunit with the substrate ammonia. The sequence is that of Carbamoyl phosphate synthase arginine-specific small chain (cpa1) from Aspergillus niger (strain ATCC MYA-4892 / CBS 513.88 / FGSC A1513).